The chain runs to 445 residues: Probable glycine dehydrogenase (decarboxylating) subunit 1 (445 aa).

This sequence belongs to the GcvP family. N-terminal subunit subfamily. In terms of assembly, the glycine cleavage system is composed of four proteins: P, T, L and H. In this organism, the P 'protein' is a heterodimer of two subunits.

The catalysed reaction is N(6)-[(R)-lipoyl]-L-lysyl-[glycine-cleavage complex H protein] + glycine + H(+) = N(6)-[(R)-S(8)-aminomethyldihydrolipoyl]-L-lysyl-[glycine-cleavage complex H protein] + CO2. Its function is as follows. The glycine cleavage system catalyzes the degradation of glycine. The P protein binds the alpha-amino group of glycine through its pyridoxal phosphate cofactor; CO(2) is released and the remaining methylamine moiety is then transferred to the lipoamide cofactor of the H protein. This is Probable glycine dehydrogenase (decarboxylating) subunit 1 from Citrifermentans bemidjiense (strain ATCC BAA-1014 / DSM 16622 / JCM 12645 / Bem) (Geobacter bemidjiensis).